A 623-amino-acid polypeptide reads, in one-letter code: Protein Atg16l2 (623 aa).

The segment covering 64 to 79 (PKDAISTRHEDWREEV) has biased composition (basic and acidic residues). The tract at residues 64-93 (PKDAISTRHEDWREEVSGTGPDQVSSPASL) is disordered. Positions 116–229 (VKKSAALDTL…ANQALVSQEL (114 aa)) form a coiled coil. WD repeat units follow at residues 338 to 377 (AHLS…LEAN), 382 to 421 (GAGG…SKET), 424 to 458 (GHKD…LGRA), 459 to 502 (YCSR…CIQV), 504 to 543 (PVQG…IRQV), 550 to 589 (KCSS…LETS), and 593 to 623 (PHCT…VLWH).

It belongs to the WD repeat ATG16 family. As to quaternary structure, homooligomer. Heterooligomer with ATG16L2. Interacts with ATG5. Self-oligomerizes to form a 800-kDa complex composed of ATG12-ATG5 and ATG16L2. Interacts with RAB33B. In terms of tissue distribution, widely expressed.

It localises to the cytoplasm. It is found in the cytosol. In terms of biological role, may play a role in regulating epithelial homeostasis in an ATG16L1-dependent manner. This chain is Protein Atg16l2 (Atg16l2), found in Mus musculus (Mouse).